We begin with the raw amino-acid sequence, 72 residues long: Potassium channel toxin kappa-KTx 5.1 (72 aa).

The signal sequence occupies residues 1 to 23 (MKLLPLLFVILIVCAILPDEASC). Positions 24 to 43 (DQSELERKEENFKDESREIV) are excised as a propeptide. 2 disulfide bridges follow: Cys-47/Cys-64 and Cys-51/Cys-60. A Histidine amide modification is found at His-70.

It belongs to the short scorpion toxin superfamily. Potassium channel inhibitor kappa-KTx family. Kappa-KTx 5 subfamily. Expressed by the venom gland.

The protein resides in the secreted. Its function is as follows. Weak blocker of potassium channels Kv1.1/KCNA1 (IC(50)=578.5 nM-9.9 uM) and Kv1.6/KCNA6 (~60% block at 30 uM of toxin). Acts by binding to the pore and occluding it. Has a voltage-dependent mode of action, which can be explained by a high content of basic residues causing repulsions at higher membrane voltages. Shows a weak interaction with muscle-type nicotinic acetylcholine receptors (nAChR), since it inhibits alpha-bungarotoxin binding to muscle-type nAChR from T.californica (IC(50)=1.4 uM). This suggests it probably weakly inhibits muscle nAChR. The mode of binding to potassium channels of this toxin differs from its homologs (including HefuTx1), since it lacks the key aromatic residue of the functional dyad. In contrast, its functionally important site is composed of a number of basic residues. The chain is Potassium channel toxin kappa-KTx 5.1 from Heterometrus laoticus (Thai giant scorpion).